A 571-amino-acid polypeptide reads, in one-letter code: Phosphoenolpyruvate-protein phosphotransferase (571 aa).

The active-site Tele-phosphohistidine intermediate is the His207. Arg312 and Arg348 together coordinate phosphoenolpyruvate. Residues Glu435 and Asp459 each contribute to the Mg(2+) site. Phosphoenolpyruvate contacts are provided by residues Asn458 to Asp459 and Arg469. Catalysis depends on Cys506, which acts as the Proton donor.

The protein belongs to the PEP-utilizing enzyme family. Homodimer. Mg(2+) serves as cofactor.

It is found in the cytoplasm. The catalysed reaction is L-histidyl-[protein] + phosphoenolpyruvate = N(pros)-phospho-L-histidyl-[protein] + pyruvate. General (non sugar-specific) component of the phosphoenolpyruvate-dependent sugar phosphotransferase system (sugar PTS). This major carbohydrate active-transport system catalyzes the phosphorylation of incoming sugar substrates concomitantly with their translocation across the cell membrane. Enzyme I transfers the phosphoryl group from phosphoenolpyruvate (PEP) to the phosphoryl carrier protein (HPr). The chain is Phosphoenolpyruvate-protein phosphotransferase (ptsI) from Chlamydia trachomatis serovar D (strain ATCC VR-885 / DSM 19411 / UW-3/Cx).